A 480-amino-acid chain; its full sequence is Glutamate--tRNA ligase (480 aa).

Residues 21–31 (PSPTGYLHVGG) carry the 'HIGH' region motif. Positions 110, 112, 137, and 139 each coordinate Zn(2+). The 'KMSKS' region motif lies at 248-252 (KLSKR). Lysine 251 contacts ATP.

The protein belongs to the class-I aminoacyl-tRNA synthetase family. Glutamate--tRNA ligase type 1 subfamily. As to quaternary structure, monomer. Zn(2+) serves as cofactor.

The protein localises to the cytoplasm. The catalysed reaction is tRNA(Glu) + L-glutamate + ATP = L-glutamyl-tRNA(Glu) + AMP + diphosphate. Catalyzes the attachment of glutamate to tRNA(Glu) in a two-step reaction: glutamate is first activated by ATP to form Glu-AMP and then transferred to the acceptor end of tRNA(Glu). This Actinobacillus succinogenes (strain ATCC 55618 / DSM 22257 / CCUG 43843 / 130Z) protein is Glutamate--tRNA ligase.